The following is a 100-amino-acid chain: Large ribosomal subunit protein uL23 (100 aa).

This sequence belongs to the universal ribosomal protein uL23 family. As to quaternary structure, part of the 50S ribosomal subunit. Contacts protein L29, and trigger factor when it is bound to the ribosome.

Functionally, one of the early assembly proteins it binds 23S rRNA. One of the proteins that surrounds the polypeptide exit tunnel on the outside of the ribosome. Forms the main docking site for trigger factor binding to the ribosome. The chain is Large ribosomal subunit protein uL23 from Aliivibrio fischeri (strain MJ11) (Vibrio fischeri).